We begin with the raw amino-acid sequence, 682 residues long: MPSLRTRREEAEMELSAPGPSPWTPAAQAHVSDAPAVTHPGSAACGTPCCSDTELEAICPHYQQPDCDTRTEDKEFLHKEDIHEDLESQAEISENYAGDVLQVPELGDLCDDVSERDWGVPEGRRLPQSLSQEGDFTPAAMGLLRGPLGEKDLDCNGFDSRFSLSPNLMACQEIPTEERPHPYDMGGQSFQHSVDLTGHEGVPTAESPLICNECGKTFQGNPDLIQCQIVHTGEASFMCDDCGKTFSQNSVLKNHHRSHMSEKAYQCSECGKAFRGHSDFSRHQSHHSSERPYMCNECGKAFSQNSSLKKHQKSHMSEKPYECNECGKAFRRSSNLIQHQRIHSGEKPYVCSECGKAFRRSSNLIKHHRTHTGEKPFECGECGKAFSQSAHLRKHQRVHTGEKPYECNDCGKPFSRVSNLIKHHRVHTGEKPYKCSDCGKAFSQSSSLIQHRRIHTGEKPHVCNICGKAFSYSSVLRKHQIIHTGEKPYRCSVCGKAFSHSSALIQHQGVHTGDKPYACHECGKTFGRSSNLILHQRVHTGEKPYECTECGKTFSQSSTLIQHQRIHNGLKPHECNQCGKAFNRSSNLIHHQKVHTGEKPYTCVECGKGFSQSSHLIQHQIIHTGERPYKCSECGKAFSQRSVLIQHQRIHTGVKPYDCAACGKAFSQRSKLIKHQLIHTRE.

Basic and acidic residues-rich tracts occupy residues 1 to 10 and 113 to 125; these read MPSLRTRREE and VSERDWGVPEGRR. Disordered stretches follow at residues 1 to 33 and 112 to 134; these read MPSLRTRREEAEMELSAPGPSPWTPAAQAHVSD and DVSERDWGVPEGRRLPQSLSQEG. The tract at residues 62-210 is necessary for transcription activation; it reads YQQPDCDTRT…GVPTAESPLI (149 aa). The C2H2-type 1; degenerate zinc-finger motif lies at 209-231; the sequence is LICNECGKTFQGNPDLIQCQIVH. The segment at 237–259 adopts a C2H2-type 2; degenerate zinc-finger fold; it reads FMCDDCGKTFSQNSVLKNHHRSH. A Glycyl lysine isopeptide (Lys-Gly) (interchain with G-Cter in SUMO2) cross-link involves residue Lys-253. 8 C2H2-type zinc fingers span residues 265 to 287, 293 to 315, 321 to 343, 349 to 371, 377 to 399, 405 to 427, 433 to 455, and 461 to 483; these read YQCSECGKAFRGHSDFSRHQSHH, YMCNECGKAFSQNSSLKKHQKSH, YECNECGKAFRRSSNLIQHQRIH, YVCSECGKAFRRSSNLIKHHRTH, FECGECGKAFSQSAHLRKHQRVH, YECNDCGKPFSRVSNLIKHHRVH, YKCSDCGKAFSQSSSLIQHRRIH, and HVCNICGKAFSYSSVLRKHQIIH. Required for nuclear localization stretches follow at residues 268–393 and 341–373; these read SECG…AHLR and RIHSGEKPYVCSECGKAFRRSSNLIKHHRTHTG. The tract at residues 473–503 is required for nuclear localization; the sequence is SSVLRKHQIIHTGEKPYRCSVCGKAFSHSSA. An N6-acetyllysine modification is found at Lys-487. C2H2-type zinc fingers lie at residues 489–511, 517–539, 545–567, 573–595, 601–623, 629–651, and 657–679; these read YRCSVCGKAFSHSSALIQHQGVH, YACHECGKTFGRSSNLILHQRVH, YECTECGKTFSQSSTLIQHQRIH, HECNQCGKAFNRSSNLIHHQKVH, YTCVECGKGFSQSSHLIQHQIIH, YKCSECGKAFSQRSVLIQHQRIH, and YDCAACGKAFSQRSKLIKHQLIH.

It belongs to the krueppel C2H2-type zinc-finger protein family. In terms of assembly, interacts with INCA1; the interaction inhibits INCA1 activity and induces the cell cycle process.

The protein resides in the nucleus. Functionally, acts as a transcriptional activator. Promotes cell proliferation by facilitating the cell cycle phase transition from the S to G2/M phase. Involved in both the hemin- and phorbol myristate acetate (PMA)-induced erythroid and megakaryocytic differentiation, respectively. Also plays a role as an inhibitor of cell apoptosis. The chain is Zinc finger protein 16 (ZNF16) from Gorilla gorilla gorilla (Western lowland gorilla).